The chain runs to 293 residues: DOMON domain-containing protein FRRS1L (293 aa).

The N-terminal stretch at 1 to 28 (MARPPRQHPGVWASLLLLLLTGPAACAA) is a signal peptide. The segment at 29-61 (SPADDGAGPGGRGPRGRARGDTGADEAVPRHDS) is disordered. The span at 46 to 61 (ARGDTGADEAVPRHDS) shows a compositional bias: basic and acidic residues. A DOMON domain is found at 119–234 (CDYFLSYRMI…WYYLFAWGPA (116 aa)). Residues 271 to 291 (TFSSPFCLLLIVALTFYLLMG) form a helical membrane-spanning segment.

In terms of assembly, component of the outer core of AMPAR complex. AMPAR complex consists of an inner core made of 4 pore-forming GluA/GRIA proteins (GRIA1, GRIA2, GRIA3 and GRIA4) and 4 major auxiliary subunits arranged in a twofold symmetry. One of the two pairs of distinct binding sites is occupied either by CNIH2, CNIH3 or CACNG2, CACNG3. The other harbors CACNG2, CACNG3, CACNG4, CACNG8 or GSG1L. This inner core of AMPAR complex is complemented by outer core constituents binding directly to the GluA/GRIA proteins at sites distinct from the interaction sites of the inner core constituents. Outer core constituents include at least PRRT1, PRRT2, CKAMP44/SHISA9, FRRS1L and NRN1. The proteins of the inner and outer core serve as a platform for other, more peripherally associated AMPAR constituents. Alone or in combination, these auxiliary subunits control the gating and pharmacology of the AMPAR complex and profoundly impact their biogenesis and protein processing. In terms of tissue distribution, expressed in adult and fetal brain. Very weak expression in medulla, spinal cord and in adult ovary.

The protein resides in the cell membrane. It localises to the synapse. In terms of biological role, important modulator of glutamate signaling pathway. In Homo sapiens (Human), this protein is DOMON domain-containing protein FRRS1L (FRRS1L).